The primary structure comprises 563 residues: NAD-dependent malic enzyme (563 aa).

Tyr-101 serves as the catalytic Proton donor. Arg-154 is a binding site for NAD(+). Lys-172 acts as the Proton acceptor in catalysis. The a divalent metal cation site is built by Glu-243, Asp-244, and Asp-267. NAD(+)-binding residues include Asp-267 and Asn-416.

The protein belongs to the malic enzymes family. As to quaternary structure, homotetramer. The cofactor is Mg(2+). Requires Mn(2+) as cofactor.

The enzyme catalyses (S)-malate + NAD(+) = pyruvate + CO2 + NADH. The catalysed reaction is oxaloacetate + H(+) = pyruvate + CO2. This is NAD-dependent malic enzyme from Pseudomonas savastanoi pv. phaseolicola (strain 1448A / Race 6) (Pseudomonas syringae pv. phaseolicola (strain 1448A / Race 6)).